Consider the following 682-residue polypeptide: DNA-directed RNA polymerase subunit beta' (682 aa).

Zn(2+) is bound by residues cysteine 69, cysteine 71, cysteine 87, and cysteine 90. Positions 489, 491, and 493 each coordinate Mg(2+).

The protein belongs to the RNA polymerase beta' chain family. RpoC1 subfamily. In plastids the minimal PEP RNA polymerase catalytic core is composed of four subunits: alpha, beta, beta', and beta''. When a (nuclear-encoded) sigma factor is associated with the core the holoenzyme is formed, which can initiate transcription. Requires Mg(2+) as cofactor. It depends on Zn(2+) as a cofactor.

It is found in the plastid. The protein localises to the chloroplast. It catalyses the reaction RNA(n) + a ribonucleoside 5'-triphosphate = RNA(n+1) + diphosphate. Its function is as follows. DNA-dependent RNA polymerase catalyzes the transcription of DNA into RNA using the four ribonucleoside triphosphates as substrates. This is DNA-directed RNA polymerase subunit beta' from Hordeum vulgare (Barley).